Consider the following 139-residue polypeptide: Metallothiol transferase FosB (139 aa).

A VOC domain is found at 4-119 (GINHITYSVS…DGHKLELHTG (116 aa)). Mg(2+)-binding residues include His-7, His-66, and Glu-115. Glu-115 acts as the Proton donor/acceptor in catalysis.

Belongs to the fosfomycin resistance protein family. FosB subfamily. Homodimer. It depends on Mg(2+) as a cofactor.

The protein resides in the cytoplasm. Metallothiol transferase which confers resistance to fosfomycin by catalyzing the addition of a thiol cofactor to fosfomycin. L-cysteine is probably the physiological thiol donor. This is Metallothiol transferase FosB from Staphylococcus epidermidis.